Consider the following 181-residue polypeptide: NAD(P)H-quinone oxidoreductase subunit I, chloroplastic (181 aa).

4Fe-4S ferredoxin-type domains follow at residues 55–84 (GRIHFEFDKCIACEVCVRVCPINLPVVDWE) and 95–124 (KNYSIDFAVCIFCGNCVEYCPTNCLSMTEE). Residues Cys64, Cys67, Cys70, Cys74, Cys104, Cys107, Cys110, and Cys114 each contribute to the [4Fe-4S] cluster site.

Belongs to the complex I 23 kDa subunit family. In terms of assembly, NDH is composed of at least 16 different subunits, 5 of which are encoded in the nucleus. Requires [4Fe-4S] cluster as cofactor.

The protein localises to the plastid. Its subcellular location is the chloroplast thylakoid membrane. The enzyme catalyses a plastoquinone + NADH + (n+1) H(+)(in) = a plastoquinol + NAD(+) + n H(+)(out). The catalysed reaction is a plastoquinone + NADPH + (n+1) H(+)(in) = a plastoquinol + NADP(+) + n H(+)(out). Its function is as follows. NDH shuttles electrons from NAD(P)H:plastoquinone, via FMN and iron-sulfur (Fe-S) centers, to quinones in the photosynthetic chain and possibly in a chloroplast respiratory chain. The immediate electron acceptor for the enzyme in this species is believed to be plastoquinone. Couples the redox reaction to proton translocation, and thus conserves the redox energy in a proton gradient. The chain is NAD(P)H-quinone oxidoreductase subunit I, chloroplastic from Angiopteris evecta (Mule's foot fern).